Reading from the N-terminus, the 164-residue chain is UPF0262 protein Saro_0143 (164 aa).

This sequence belongs to the UPF0262 family.

The polypeptide is UPF0262 protein Saro_0143 (Novosphingobium aromaticivorans (strain ATCC 700278 / DSM 12444 / CCUG 56034 / CIP 105152 / NBRC 16084 / F199)).